Reading from the N-terminus, the 342-residue chain is Dihydroorotate dehydrogenase (quinone) (342 aa).

FMN is bound by residues 61 to 65 and threonine 85; that span reads AGLDK. Lysine 65 lines the substrate pocket. 110–114 provides a ligand contact to substrate; sequence NRMGF. FMN is bound by residues asparagine 138 and asparagine 171. Asparagine 171 serves as a coordination point for substrate. The Nucleophile role is filled by serine 174. Asparagine 176 contacts substrate. Residues lysine 216 and threonine 244 each coordinate FMN. 245–246 contributes to the substrate binding site; that stretch reads NT. Residues glycine 267, glycine 296, and 317–318 contribute to the FMN site; that span reads YS.

The protein belongs to the dihydroorotate dehydrogenase family. Type 2 subfamily. Monomer. It depends on FMN as a cofactor.

It localises to the cell membrane. The catalysed reaction is (S)-dihydroorotate + a quinone = orotate + a quinol. The protein operates within pyrimidine metabolism; UMP biosynthesis via de novo pathway; orotate from (S)-dihydroorotate (quinone route): step 1/1. Functionally, catalyzes the conversion of dihydroorotate to orotate with quinone as electron acceptor. The chain is Dihydroorotate dehydrogenase (quinone) from Pseudomonas aeruginosa (strain UCBPP-PA14).